Reading from the N-terminus, the 457-residue chain is Cysteine--tRNA ligase (457 aa).

Cys29 provides a ligand contact to Zn(2+). The 'HIGH' region motif lies at Pro31 to Asn41. The Zn(2+) site is built by Cys214, His239, and Glu243. Residues Lys272–Ser276 carry the 'KMSKS' region motif. ATP is bound at residue Lys275.

The protein belongs to the class-I aminoacyl-tRNA synthetase family. Monomer. Zn(2+) serves as cofactor.

The protein resides in the cytoplasm. The catalysed reaction is tRNA(Cys) + L-cysteine + ATP = L-cysteinyl-tRNA(Cys) + AMP + diphosphate. The sequence is that of Cysteine--tRNA ligase (cysS) from Rickettsia prowazekii (strain Madrid E).